A 287-amino-acid chain; its full sequence is Glutamate racemase (287 aa).

Polar residues predominate over residues 1–15 (MATKPQDANTTSREA). The tract at residues 1 to 25 (MATKPQDANTTSREAITSKADSPPR) is disordered. Substrate contacts are provided by residues 32–33 (DS) and 64–65 (YG). Catalysis depends on cysteine 96, which acts as the Proton donor/acceptor. 97 to 98 (NT) is a substrate binding site. Cysteine 208 acts as the Proton donor/acceptor in catalysis. 209 to 210 (TH) lines the substrate pocket.

This sequence belongs to the aspartate/glutamate racemases family.

The enzyme catalyses L-glutamate = D-glutamate. It participates in cell wall biogenesis; peptidoglycan biosynthesis. In terms of biological role, provides the (R)-glutamate required for cell wall biosynthesis. This Yersinia pseudotuberculosis serotype IB (strain PB1/+) protein is Glutamate racemase.